The chain runs to 247 residues: Cell division protein ZapD (247 aa).

Belongs to the ZapD family. In terms of assembly, interacts with FtsZ.

The protein resides in the cytoplasm. Functionally, cell division factor that enhances FtsZ-ring assembly. Directly interacts with FtsZ and promotes bundling of FtsZ protofilaments, with a reduction in FtsZ GTPase activity. The polypeptide is Cell division protein ZapD (Escherichia fergusonii (strain ATCC 35469 / DSM 13698 / CCUG 18766 / IAM 14443 / JCM 21226 / LMG 7866 / NBRC 102419 / NCTC 12128 / CDC 0568-73)).